The primary structure comprises 96 residues: UPF0235 protein YggU (96 aa).

It belongs to the UPF0235 family.

The polypeptide is UPF0235 protein YggU (Salmonella typhimurium (strain LT2 / SGSC1412 / ATCC 700720)).